The following is a 993-amino-acid chain: General transcription factor II-I repeat domain-containing protein 1 (993 aa).

GTF2I-like repeat units follow at residues 117-211 (LGPT…EPKS) and 332-426 (LRET…DGTT). The disordered stretch occupies residues 461 to 480 (GSRSEKSSISDECEPGTSSE). GTF2I-like repeat units follow at residues 597 to 691 (DGIG…LEDC), 727 to 821 (LSRI…RPDD), and 824 to 918 (ANRL…ICSE). The segment at 916–961 (CSEPPKIKNGNTGPKRKRKRVSEGNSISSASSNCSSSSSSSSNMDP) is disordered. A Nuclear localization signal motif is present at residues 929 to 936 (PKRKRKRV). Residues 938–961 (EGNSISSASSNCSSSSSSSSNMDP) show a composition bias toward low complexity.

Belongs to the TFII-I family. Interacts (via repeats 4-5) with foxh1/fast1 (via Fork-head domain). Interacts with smad2 and smad3 (via MH1 domain) in a ligand (activin)-dependent manner. Interacts with pou5f1.1/oct-25 to form a repression complex on the promoters of the gsc and mix2 genes. Uniformly expressed in the embryo in pre- and early gastrula stages. Enriched in the head region of early neurula through tailbud stages.

It is found in the nucleus. Transcription factor that activates a subset of organizer-specific genes. Binds to the distal element (DE) of the gsc promoter to regulate its expression. In the presence of pou5f1.1/oct-25, forms a repression complex on the promoter of the gsc and mix2 genes to inhibit their transcription. The sequence is that of General transcription factor II-I repeat domain-containing protein 1 (gtf2ird1) from Xenopus laevis (African clawed frog).